A 349-amino-acid polypeptide reads, in one-letter code: MTEMSFLNSEVLAGDLMSPFDQSGLGAEESLGLLDDYLEVAKHLKPHGFSSDKAGSSEWPAMDDGLASASDTGKEDAFSGTDWMLEKMDLKEFDFDALFRMDDLETMPDELLTTLDDTCDLFAPLVQETNKEPPQTVNPIGHLPESLIKVDQVAPFTFLQPFPCSPGVLSSTPEHSFSLELGSEVDISEGDRKPDSAAYITLIPPCVKEEDTPSDNDSGICMSPESYLGSPQHSPSTSRAPPDNLPSPGGSRGSPRPKPYDPPGVSLTAKVKTEKLDKKLKKMEQNKTAATRYRQKKRAEQEALTGECKELEKKNEALKEKADSLAKEIQYLKDLIEEVRKARGKKRVP.

Disordered regions lie at residues 49–75 (FSSD…TGKE), 204–271 (PPCV…TAKV), and 279–298 (KLKK…QKKR). The residue at position 60 (Pro-60) is a 4-hydroxyproline. Residue Thr-212 is modified to Phosphothreonine. Phosphoserine is present on residues Ser-214, Ser-218, Ser-223, Ser-230, and Ser-234. The BetaTrCP degron motif motif lies at 214 to 223 (SDNDSGICMS). Positions 229-239 (GSPQHSPSTSR) are enriched in polar residues. At Pro-235 the chain carries 4-hydroxyproline. A Phosphoserine modification is found at Ser-247. At Ser-251 the chain carries Phosphoserine; by RPS6KA3. Residues Lys-258 and Lys-270 each participate in a glycyl lysine isopeptide (Lys-Gly) (interchain with G-Cter in SUMO2) cross-link. Residues 276–339 (LDKKLKKMEQ…QYLKDLIEEV (64 aa)) form the bZIP domain. The interval 278-298 (KKLKKMEQNKTAATRYRQKKR) is basic motif. The interval 303 to 339 (ALTGECKELEKKNEALKEKADSLAKEIQYLKDLIEEV) is interaction with GABBR1. The leucine-zipper stretch occupies residues 304–332 (LTGECKELEKKNEALKEKADSLAKEIQYL). Lys-309 is modified (N6-acetyllysine).

This sequence belongs to the bZIP family. Binds DNA as a homodimer and as a heterodimer. Heterodimer; heterodimerizes with CEBPB. Heterodimer; heterodimerizes with DDIT3/CHOP. Interacts with CEP290 (via an N-terminal region). Interacts with NEK6, DAPK2 (isoform 2) and ZIPK/DAPK3. Interacts (via its leucine zipper domain) with GABBR1 and GABBR2 (via their C-termini). Forms a heterodimer with TXLNG in osteoblasts. Interacts (via its DNA binding domain) with FOXO1 (C-terminal half); the interaction occurs in osteoblasts and regulates glucose homeostasis through suppression of beta-cell proliferation and a decrease in insulin production. Interacts with SATB2; the interaction results in enhanced DNA binding and transactivation by these transcription factors. Interacts with ABRAXAS2. Interacts with TRIB3, inhibiting the transactivation activity of ATF4. Interacts with DISC1; which inhibits ATF4 transcription factor activity by disrupting ATF4 dimerization and DNA-binding. Interacts with EP300/p300; EP300/p300 stabilizes ATF4 and increases its transcriptional activity independently of its catalytic activity by preventing its ubiquitination. Ubiquitinated by SCF(BTRC) in response to mTORC1 signal, followed by proteasomal degradation and leading to down-regulate expression of SIRT4. Interaction with EP300/p300 inhibits ubiquitination by SCF(BTRC). Post-translationally, phosphorylation at Ser-251 by RPS6KA3/RSK2 in osteoblasts enhances transactivation activity and promotes osteoblast differentiation. Phosphorylated on the betaTrCP degron motif at Ser-218, followed by phosphorylation at Thr-212, Ser-223, Ser-230, Ser-234 and Ser-247, promoting interaction with BTRC and ubiquitination. Phosphorylation is promoted by mTORC1. Phosphorylation at Ser-214 by CK2 decreases its stability. Phosphorylated by NEK6. In terms of processing, hydroxylated by PHD3, leading to decreased protein stability. In terms of tissue distribution, ubiquitously expressed in adults.

It is found in the nucleus. The protein resides in the nucleus speckle. The protein localises to the cytoplasm. Its subcellular location is the cell membrane. It localises to the cytoskeleton. It is found in the microtubule organizing center. The protein resides in the centrosome. Transcription factor that binds the cAMP response element (CRE) (consensus: 5'-GTGACGT[AC][AG]-3') and displays two biological functions, as regulator of metabolic and redox processes under normal cellular conditions, and as master transcription factor during integrated stress response (ISR). Binds to asymmetric CRE's as a heterodimer and to palindromic CRE's as a homodimer. Core effector of the ISR, which is required for adaptation to various stress such as endoplasmic reticulum (ER) stress, amino acid starvation, mitochondrial stress or oxidative stress. During ISR, ATF4 translation is induced via an alternative ribosome translation re-initiation mechanism in response to EIF2S1/eIF-2-alpha phosphorylation, and stress-induced ATF4 acts as a master transcription factor of stress-responsive genes in order to promote cell recovery. Promotes the transcription of genes linked to amino acid sufficiency and resistance to oxidative stress to protect cells against metabolic consequences of ER oxidation. Activates the transcription of NLRP1, possibly in concert with other factors in response to ER stress. Activates the transcription of asparagine synthetase (ASNS) in response to amino acid deprivation or ER stress. However, when associated with DDIT3/CHOP, the transcriptional activation of the ASNS gene is inhibited in response to amino acid deprivation. Together with DDIT3/CHOP, mediates programmed cell death by promoting the expression of genes involved in cellular amino acid metabolic processes, mRNA translation and the terminal unfolded protein response (terminal UPR), a cellular response that elicits programmed cell death when ER stress is prolonged and unresolved. Activates the expression of COX7A2L/SCAF1 downstream of the EIF2AK3/PERK-mediated unfolded protein response, thereby promoting formation of respiratory chain supercomplexes and increasing mitochondrial oxidative phosphorylation. Together with DDIT3/CHOP, activates the transcription of the IRS-regulator TRIB3 and promotes ER stress-induced neuronal cell death by regulating the expression of BBC3/PUMA in response to ER stress. May cooperate with the UPR transcriptional regulator QRICH1 to regulate ER protein homeostasis which is critical for cell viability in response to ER stress. In the absence of stress, ATF4 translation is at low levels and it is required for normal metabolic processes such as embryonic lens formation, fetal liver hematopoiesis, bone development and synaptic plasticity. Acts as a regulator of osteoblast differentiation in response to phosphorylation by RPS6KA3/RSK2: phosphorylation in osteoblasts enhances transactivation activity and promotes expression of osteoblast-specific genes and post-transcriptionally regulates the synthesis of Type I collagen, the main constituent of the bone matrix. Cooperates with FOXO1 in osteoblasts to regulate glucose homeostasis through suppression of beta-cell production and decrease in insulin production. Activates transcription of SIRT4. Regulates the circadian expression of the core clock component PER2 and the serotonin transporter SLC6A4. Binds in a circadian time-dependent manner to the cAMP response elements (CRE) in the SLC6A4 and PER2 promoters and periodically activates the transcription of these genes. Mainly acts as a transcriptional activator in cellular stress adaptation, but it can also act as a transcriptional repressor: acts as a regulator of synaptic plasticity by repressing transcription, thereby inhibiting induction and maintenance of long-term memory. Regulates synaptic functions via interaction with DISC1 in neurons, which inhibits ATF4 transcription factor activity by disrupting ATF4 dimerization and DNA-binding. This Mus musculus (Mouse) protein is Cyclic AMP-dependent transcription factor ATF-4.